The following is a 387-amino-acid chain: Alanine racemase (387 aa).

The Proton acceptor; specific for D-alanine role is filled by Lys-48. N6-(pyridoxal phosphate)lysine is present on Lys-48. Arg-146 is a binding site for substrate. The Proton acceptor; specific for L-alanine role is filled by Tyr-267. A substrate-binding site is contributed by Met-315.

It belongs to the alanine racemase family. Requires pyridoxal 5'-phosphate as cofactor.

It carries out the reaction L-alanine = D-alanine. It functions in the pathway amino-acid biosynthesis; D-alanine biosynthesis; D-alanine from L-alanine: step 1/1. Functionally, catalyzes the interconversion of L-alanine and D-alanine. May also act on other amino acids. This Methylacidiphilum infernorum (isolate V4) (Methylokorus infernorum (strain V4)) protein is Alanine racemase (alr).